A 311-amino-acid polypeptide reads, in one-letter code: 4-hydroxy-tetrahydrodipicolinate synthase (311 aa).

Thr51 lines the pyruvate pocket. Catalysis depends on Tyr140, which acts as the Proton donor/acceptor. Catalysis depends on Lys168, which acts as the Schiff-base intermediate with substrate. Ile209 contacts pyruvate.

It belongs to the DapA family. Homotetramer; dimer of dimers.

Its subcellular location is the cytoplasm. It catalyses the reaction L-aspartate 4-semialdehyde + pyruvate = (2S,4S)-4-hydroxy-2,3,4,5-tetrahydrodipicolinate + H2O + H(+). It participates in amino-acid biosynthesis; L-lysine biosynthesis via DAP pathway; (S)-tetrahydrodipicolinate from L-aspartate: step 3/4. Functionally, catalyzes the condensation of (S)-aspartate-beta-semialdehyde [(S)-ASA] and pyruvate to 4-hydroxy-tetrahydrodipicolinate (HTPA). In Streptococcus pneumoniae (strain 70585), this protein is 4-hydroxy-tetrahydrodipicolinate synthase.